The primary structure comprises 257 residues: Pyridoxine 5'-phosphate synthase (257 aa).

Asn-6 contributes to the 3-amino-2-oxopropyl phosphate binding site. 8 to 9 (DH) provides a ligand contact to 1-deoxy-D-xylulose 5-phosphate. Arg-17 contacts 3-amino-2-oxopropyl phosphate. Residue His-41 is the Proton acceptor of the active site. 2 residues coordinate 1-deoxy-D-xylulose 5-phosphate: Arg-43 and His-48. Glu-68 functions as the Proton acceptor in the catalytic mechanism. Thr-98 is a binding site for 1-deoxy-D-xylulose 5-phosphate. The active-site Proton donor is the His-210. 3-amino-2-oxopropyl phosphate-binding positions include Gly-211 and 232 to 233 (GQ).

The protein belongs to the PNP synthase family. In terms of assembly, homooctamer; tetramer of dimers.

It is found in the cytoplasm. The enzyme catalyses 3-amino-2-oxopropyl phosphate + 1-deoxy-D-xylulose 5-phosphate = pyridoxine 5'-phosphate + phosphate + 2 H2O + H(+). Its pathway is cofactor biosynthesis; pyridoxine 5'-phosphate biosynthesis; pyridoxine 5'-phosphate from D-erythrose 4-phosphate: step 5/5. Catalyzes the complicated ring closure reaction between the two acyclic compounds 1-deoxy-D-xylulose-5-phosphate (DXP) and 3-amino-2-oxopropyl phosphate (1-amino-acetone-3-phosphate or AAP) to form pyridoxine 5'-phosphate (PNP) and inorganic phosphate. This is Pyridoxine 5'-phosphate synthase from Campylobacter jejuni subsp. doylei (strain ATCC BAA-1458 / RM4099 / 269.97).